We begin with the raw amino-acid sequence, 552 residues long: Hydroxylamine reductase (552 aa).

C5, C8, C20, and C27 together coordinate [2Fe-2S] cluster. Hybrid [4Fe-2O-2S] cluster is bound by residues H251, E275, C319, C407, C435, C460, E494, and K496. C407 is modified (cysteine persulfide).

This sequence belongs to the HCP family. [2Fe-2S] cluster is required as a cofactor. The cofactor is hybrid [4Fe-2O-2S] cluster.

The protein resides in the cytoplasm. It catalyses the reaction A + NH4(+) + H2O = hydroxylamine + AH2 + H(+). Its function is as follows. Catalyzes the reduction of hydroxylamine to form NH(3) and H(2)O. The protein is Hydroxylamine reductase of Shigella flexneri.